Here is a 245-residue protein sequence, read N- to C-terminus: Ribonuclease 3 (245 aa).

One can recognise an RNase III domain in the interval 19–148 (FKVFQEKIGI…FIGALYLDQG (130 aa)). Residue Glu61 coordinates Mg(2+). Asp65 is a catalytic residue. Residues Asp134 and Glu137 each contribute to the Mg(2+) site. The active site involves Glu137. Residues 174–243 (DYKSQLQELI…AAEALKKLKE (70 aa)) enclose the DRBM domain.

This sequence belongs to the ribonuclease III family. As to quaternary structure, homodimer. Mg(2+) serves as cofactor.

It localises to the cytoplasm. The enzyme catalyses Endonucleolytic cleavage to 5'-phosphomonoester.. Its function is as follows. Digests double-stranded RNA. Involved in the processing of primary rRNA transcript to yield the immediate precursors to the large and small rRNAs (23S and 16S). Processes some mRNAs, and tRNAs when they are encoded in the rRNA operon. Processes pre-crRNA and tracrRNA of type II CRISPR loci if present in the organism. This Bacillus cereus (strain ZK / E33L) protein is Ribonuclease 3.